The following is a 68-amino-acid chain: DNA-directed RNA polymerase subunit omega (68 aa).

Belongs to the RNA polymerase subunit omega family. In terms of assembly, the RNAP catalytic core consists of 2 alpha, 1 beta, 1 beta' and 1 omega subunit. When a sigma factor is associated with the core the holoenzyme is formed, which can initiate transcription.

The enzyme catalyses RNA(n) + a ribonucleoside 5'-triphosphate = RNA(n+1) + diphosphate. In terms of biological role, promotes RNA polymerase assembly. Latches the N- and C-terminal regions of the beta' subunit thereby facilitating its interaction with the beta and alpha subunits. The protein is DNA-directed RNA polymerase subunit omega of Citrifermentans bemidjiense (strain ATCC BAA-1014 / DSM 16622 / JCM 12645 / Bem) (Geobacter bemidjiensis).